Here is a 500-residue protein sequence, read N- to C-terminus: Glycerol kinase (500 aa).

Threonine 13 is an ADP binding site. ATP is bound by residues threonine 13, threonine 14, and serine 15. Threonine 13 contacts sn-glycerol 3-phosphate. Residue arginine 17 coordinates ADP. Positions 83, 84, 135, and 244 each coordinate sn-glycerol 3-phosphate. Glycerol-binding residues include arginine 83, glutamate 84, tyrosine 135, aspartate 244, and glutamine 245. 2 residues coordinate ADP: threonine 266 and glycine 309. Threonine 266, glycine 309, glutamine 313, and glycine 410 together coordinate ATP. The ADP site is built by glycine 410 and asparagine 414.

The protein belongs to the FGGY kinase family.

The enzyme catalyses glycerol + ATP = sn-glycerol 3-phosphate + ADP + H(+). Its pathway is polyol metabolism; glycerol degradation via glycerol kinase pathway; sn-glycerol 3-phosphate from glycerol: step 1/1. Inhibited by fructose 1,6-bisphosphate (FBP). Its function is as follows. Key enzyme in the regulation of glycerol uptake and metabolism. Catalyzes the phosphorylation of glycerol to yield sn-glycerol 3-phosphate. This is Glycerol kinase from Burkholderia cenocepacia (strain HI2424).